We begin with the raw amino-acid sequence, 310 residues long: MFKFQKEQEIANIAGIKVGGQPGELPTLLAGTIFYNKHEIVEDAAKGLFDRIAAEKLVNLQEVGSDMTGNPHMVHIFGTTQESITRYIDFIAEVSESPFLIDSPEGTVRAHASRYVSEIGLADRAVYNSINMSITTSEIEALAQSDIDSSIILGFNAMDSSLRGRMEMLETGAGLLEEGLLSIADRCGIVNKLIDPSITPMGNGAGIALRMTITAKAKWGYPTGSGIHNAPSAWNWLNRQKEKNPVLYKICDVGSTCLQQAAAGDFILYGPIEYAQYVFPMAAMSDIMIAEAVADLDIEPASRHPINLLV.

This sequence belongs to the MtrH family. May be part of a complex composed of 3 subunits; MtxA, MtxH and MtxX.

This Methanosarcina acetivorans (strain ATCC 35395 / DSM 2834 / JCM 12185 / C2A) protein is Putative methyltransferase mtx subunit H (mtxH).